Here is a 70-residue protein sequence, read N- to C-terminus: Protein SlyX homolog (70 aa).

It belongs to the SlyX family.

The sequence is that of Protein SlyX homolog from Shewanella woodyi (strain ATCC 51908 / MS32).